We begin with the raw amino-acid sequence, 905 residues long: Coatomer subunit beta' (905 aa).

WD repeat units follow at residues 13-52, 55-94, 97-136, 140-180, 183-224, 227-266, 350-388, and 390-425; these read AMSDRVKSVDLHPTEPWMLASLYNGSVCVWNHETQTLVKT, VCDLPVRAAKFVARKNWVVTGADDMQIRVFNYNTLERVHM, AHSDYIRCIAVHPTQPFILTSSDDMLIKLWDWDKKWSCSQ, GHTH…PNFT, GHEK…CVQT, GHAQNVSCATFHPELPIIITGSEDGTVRIWHSSTYRLEST, SCEIYPQTIQHNPNGRFVVVCGDGEYIIYTAMALRNKSF, and SAQEFAWAHDSSEYAIRESNSVVKIFKNFKEKKSFK. Lys627 is modified (N6-acetyllysine). The stretch at 746–783 is one WD 9 repeat; sequence IRTGRLPEAAFLARTYLPSQVSRVVKLWRENLSKVNQK. The disordered stretch occupies residues 837 to 905; the sequence is EEAKRFQPSR…INLDEDILDD (69 aa). At Ser859 the chain carries Phosphoserine. Residues 867 to 891 are a coiled coil; it reads QTTHKEEKSFQELEDDLDTMELEDI. The span at 878–905 shows a compositional bias: acidic residues; that stretch reads ELEDDLDTMELEDIDTTDINLDEDILDD.

The protein belongs to the WD repeat COPB2 family. As to quaternary structure, oligomeric complex that consists of at least the alpha, beta, beta', gamma, delta, epsilon and zeta subunits. Probably interacts with PEX11A. Interacts with JAGN1. Interacts with SCYL1.

The protein localises to the cytoplasm. It localises to the cytosol. Its subcellular location is the golgi apparatus membrane. The protein resides in the cytoplasmic vesicle. It is found in the COPI-coated vesicle membrane. The coatomer is a cytosolic protein complex that binds to dilysine motifs and reversibly associates with Golgi non-clathrin-coated vesicles, which further mediate biosynthetic protein transport from the ER, via the Golgi up to the trans Golgi network. Coatomer complex is required for budding from Golgi membranes, and is essential for the retrograde Golgi-to-ER transport of dilysine-tagged proteins. In mammals, the coatomer can only be recruited by membranes associated to ADP-ribosylation factors (ARFs), which are small GTP-binding proteins; the complex also influences the Golgi structural integrity, as well as the processing, activity, and endocytic recycling of LDL receptors. Functionally, this coatomer complex protein, essential for Golgi budding and vesicular trafficking, is a selective binding protein (RACK) for protein kinase C, epsilon type. It binds to Golgi membranes in a GTP-dependent manner. This is Coatomer subunit beta' (Copb2) from Rattus norvegicus (Rat).